A 114-amino-acid polypeptide reads, in one-letter code: MASEEGQVIACHTVETWNEQLQKANESKTLVVVDFTASWCGPCRFIAPFFADLAKKLPNVLFLKVDTDELKSVASDWAIQAMPTFMFLKEGKILDKVVGAKKDELQSTIAKHLA.

N-acetylalanine is present on A2. The Thioredoxin domain occupies 2 to 114 (ASEEGQVIAC…LQSTIAKHLA (113 aa)). Catalysis depends on nucleophile residues C40 and C43. A disulfide bridge connects residues C40 and C43.

This sequence belongs to the thioredoxin family. Plant H-type subfamily. As to quaternary structure, interacts with FBA6. Interacts with MDH1.

The protein resides in the cytoplasm. Its function is as follows. Thiol-disulfide oxidoreductase involved in the redox regulation of a number of cytosolic enzymes. Activates the cytosolic malate dehydrogenase (MDH) probably by reducing an interchain disulfide bond of the inactive MDH homodimer. Possesses insulin disulfide bonds reducing activity. This Arabidopsis thaliana (Mouse-ear cress) protein is Thioredoxin H1 (TRX1).